Consider the following 446-residue polypeptide: Citrate/sodium symporter (446 aa).

The next 5 membrane-spanning stretches (helical) occupy residues 23–43 (IFGMPLPLYAFALITLLLSHF), 46–66 (AIPTDLVGGFALMFVMGAIFG), 79–99 (IGGAPVMIFLVAAYFVYAGIF), 110–130 (VMDKSNFLNLFIAVLITGAIL), and 148–168 (ILAGIVGASLFGIVIGLCFGI). Na(+) is bound by residues Ile181 and Gly183. Positions 186 and 187 each coordinate citrate. A run of 5 helical transmembrane segments spans residues 213-233 (IAILTIANIFAIIFAALLDMI), 267-287 (ETAVGMVLSTTCFLLAYVVAK), 289-309 (ILPSIGGVSIHYFAWMVLIVA), 335-355 (QLLWVLMVGVGVCYTDLQEII), and 364-384 (VIAAIIVVGAVVGAAIGGWLI). Na(+) is bound by residues Met399 and Asn401. Residues Arg402, Gly404, Ser405, and Arg428 each contribute to the citrate site. Residues 425–445 (ISSRLGGGIVLVIASIVFSMM) traverse the membrane as a helical segment.

Belongs to the 2-hydroxycarboxylate transporter (2-HCT) (TC 2.A.24) family. Homodimer.

The protein localises to the cell inner membrane. It catalyses the reaction citrate(out) + 2 Na(+)(out) = citrate(in) + 2 Na(+)(in). Functionally, secondary active transporter that catalyzes the uptake of citrate across the membrane with the concomitant uptake of sodium. Is specific for citrate. In Salmonella pullorum, this protein is Citrate/sodium symporter.